We begin with the raw amino-acid sequence, 188 residues long: Elongation factor P (188 aa).

Position 34 is an N6-(3,6-diaminohexanoyl)-5-hydroxylysine (Lys34).

The protein belongs to the elongation factor P family. In terms of processing, may be beta-lysylated on the epsilon-amino group of Lys-34 by the combined action of EpmA and EpmB, and then hydroxylated on the C5 position of the same residue by EpmC (if this protein is present). Lysylation is critical for the stimulatory effect of EF-P on peptide-bond formation. The lysylation moiety may extend toward the peptidyltransferase center and stabilize the terminal 3-CCA end of the tRNA. Hydroxylation of the C5 position on Lys-34 may allow additional potential stabilizing hydrogen-bond interactions with the P-tRNA.

It localises to the cytoplasm. The protein operates within protein biosynthesis; polypeptide chain elongation. In terms of biological role, involved in peptide bond synthesis. Alleviates ribosome stalling that occurs when 3 or more consecutive Pro residues or the sequence PPG is present in a protein, possibly by augmenting the peptidyl transferase activity of the ribosome. Modification of Lys-34 is required for alleviation. In Xanthomonas oryzae pv. oryzae (strain MAFF 311018), this protein is Elongation factor P.